The chain runs to 319 residues: MASNEVLVLRGTLEGHNGWVTSLATSAGQPNLLLSASRDKTLISWKLTGDDQKFGVPVRSFKGHSHIVQDCTLTADGAYALSASWDKTLRLWDVATGETYQRFVGHKSDVMSVDIDKKASMIISGSRDKTIKVWTIKGQCLATLLGHNDWVSQVRVVPNEKADDDSVTIISAGNDKMVKAWNLNQFQIEADFIGHNSNINTLTASPDGTLIASAGKDGEIMLWNLAAKKAMYTLSAQDEVFSLAFSPNRYWLAAATATGIKVFSLDPQYLVDDLRPEFAGYSKAAEPHAVSLAWSADGQTLFAGYTDNVIRVWQVMTAN.

Alanine 2 bears the N-acetylalanine mark. WD repeat units follow at residues 15–55 (GHNG…QKFG), 63–102 (GHSH…TYQR), 105–145 (GHKS…ATLL), 147–191 (HNDW…IEAD), 194–233 (GHNS…AMYT), 235–275 (SAQD…DDLR), and 284–319 (AAEP…MTAN). Glycyl lysine isopeptide (Lys-Gly) (interchain with G-Cter in ubiquitin) cross-links involve residues lysine 46 and lysine 53. Threonine 96 is modified (phosphothreonine). Glycyl lysine isopeptide (Lys-Gly) (interchain with G-Cter in ubiquitin) cross-links involve residues lysine 107, lysine 137, and lysine 161. Threonine 168 is subject to Phosphothreonine.

This sequence belongs to the WD repeat G protein beta family. Ribosomal protein RACK1 subfamily. As to quaternary structure, component of the small ribosomal subunit (SSU). Mature yeast ribosomes consist of a small (40S) and a large (60S) subunit. The 40S small subunit contains 1 molecule of ribosomal RNA (18S rRNA) and 33 different proteins (encoded by 57 genes). The large 60S subunit contains 3 rRNA molecules (25S, 5.8S and 5S rRNA) and 46 different proteins (encoded by 81 genes). RACK1 is located at the head of the SSU in the vicinity of the mRNA exit channel. RACK1 interacts with the mRNA-binding protein SCP16. RACK1 also exists simultaneously as a homodimer in a cytosolic non-ribosome-bound form.

Its subcellular location is the cytoplasm. Functionally, component of the ribosome, a large ribonucleoprotein complex responsible for the synthesis of proteins in the cell. The small ribosomal subunit (SSU) binds messenger RNAs (mRNAs) and translates the encoded message by selecting cognate aminoacyl-transfer RNA (tRNA) molecules. The large subunit (LSU) contains the ribosomal catalytic site termed the peptidyl transferase center (PTC), which catalyzes the formation of peptide bonds, thereby polymerizing the amino acids delivered by tRNAs into a polypeptide chain. The nascent polypeptides leave the ribosome through a tunnel in the LSU and interact with protein factors that function in enzymatic processing, targeting, and the membrane insertion of nascent chains at the exit of the ribosomal tunnel. Located at the head of the 40S ribosomal subunit in the vicinity of the mRNA exit channel, RACK1 serves as a scaffold protein that can recruit other proteins to the ribosome. Involved in induction of the ribosome quality control (RQC) pathway; a pathway that degrades nascent peptide chains during problematic translation. Involved in the negative regulation of translation of a specific subset of proteins. The sequence is that of Small ribosomal subunit protein RACK1 from Saccharomyces cerevisiae (strain ATCC 204508 / S288c) (Baker's yeast).